Reading from the N-terminus, the 159-residue chain is NADH-quinone oxidoreductase subunit I (159 aa).

2 consecutive 4Fe-4S ferredoxin-type domains span residues 51–80 (RRYENGEERCIACKLCEAICPAQAIVIEAD) and 90–119 (TRYDIDMTKCIYCGLCQAACPVDAIVEGPN). Cysteine 60, cysteine 63, cysteine 66, cysteine 70, cysteine 99, cysteine 102, cysteine 105, and cysteine 109 together coordinate [4Fe-4S] cluster.

This sequence belongs to the complex I 23 kDa subunit family. As to quaternary structure, NDH-1 is composed of 14 different subunits. Subunits NuoA, H, J, K, L, M, N constitute the membrane sector of the complex. Requires [4Fe-4S] cluster as cofactor.

It localises to the cell inner membrane. The catalysed reaction is a quinone + NADH + 5 H(+)(in) = a quinol + NAD(+) + 4 H(+)(out). Its function is as follows. NDH-1 shuttles electrons from NADH, via FMN and iron-sulfur (Fe-S) centers, to quinones in the respiratory chain. The immediate electron acceptor for the enzyme in this species is believed to be ubiquinone. Couples the redox reaction to proton translocation (for every two electrons transferred, four hydrogen ions are translocated across the cytoplasmic membrane), and thus conserves the redox energy in a proton gradient. The chain is NADH-quinone oxidoreductase subunit I from Rickettsia massiliae (strain Mtu5).